The primary structure comprises 577 residues: Sulfite reductase [NADPH] hemoprotein beta-component (577 aa).

[4Fe-4S] cluster-binding residues include Cys-440, Cys-446, Cys-486, and Cys-490. Position 490 (Cys-490) interacts with siroheme.

This sequence belongs to the nitrite and sulfite reductase 4Fe-4S domain family. In terms of assembly, alpha(8)-beta(8). The alpha component is a flavoprotein, the beta component is a hemoprotein. Siroheme serves as cofactor. Requires [4Fe-4S] cluster as cofactor.

It carries out the reaction hydrogen sulfide + 3 NADP(+) + 3 H2O = sulfite + 3 NADPH + 4 H(+). Its pathway is sulfur metabolism; hydrogen sulfide biosynthesis; hydrogen sulfide from sulfite (NADPH route): step 1/1. In terms of biological role, component of the sulfite reductase complex that catalyzes the 6-electron reduction of sulfite to sulfide. This is one of several activities required for the biosynthesis of L-cysteine from sulfate. In Vibrio cholerae serotype O1 (strain ATCC 39315 / El Tor Inaba N16961), this protein is Sulfite reductase [NADPH] hemoprotein beta-component.